Consider the following 394-residue polypeptide: DNA replication and repair protein RecF (394 aa).

30–37 contributes to the ATP binding site; that stretch reads GSNGQGKT.

Belongs to the RecF family.

It localises to the cytoplasm. Functionally, the RecF protein is involved in DNA metabolism; it is required for DNA replication and normal SOS inducibility. RecF binds preferentially to single-stranded, linear DNA. It also seems to bind ATP. The sequence is that of DNA replication and repair protein RecF from Cutibacterium acnes (strain DSM 16379 / KPA171202) (Propionibacterium acnes).